A 413-amino-acid chain; its full sequence is Protein esc1 (413 aa).

The segment covering 1–22 (MSSYALPSMQPTPTSSIPLRQM) has biased composition (polar residues). Disordered regions lie at residues 1–202 (MSSY…NQPS) and 230–265 (MYVPQQQTSHSSGASYQNESANPPVQSPMQYSYSQG). The span at 23-42 (SQPTTSAPSNSASSTPYSPQ) shows a compositional bias: low complexity. Positions 43 to 63 (QVPLTHNSYPLSTPSSFQHGQ) are enriched in polar residues. Composition is skewed to low complexity over residues 86–103 (SAAPASSSPTSATLSTAA) and 116–126 (SSSSYVYSVPP). Residues 127–136 (TNSTTSQASA) show a composition bias toward polar residues. The span at 150–197 (STTLTPSTTDSSSTDVSSSDSVSTSASSSNASNTVSVTSPASSSATPL) shows a compositional bias: low complexity. Positions 334-385 (ELRTSHKLAERKRRKEIKELFDDLKDALPLDKSTKSSKWGLLTRAIQYIEQL) constitute a bHLH domain.

Efficient DNA binding requires dimerization with another bHLH protein.

Its subcellular location is the nucleus. Its function is as follows. Involved in the sexual differentiation process. Modulate the ability of the cell to differentiate in response to the nitrogen starvation signal; in particular in response to decreases in the level of cellular cAMP. In Schizosaccharomyces pombe (strain 972 / ATCC 24843) (Fission yeast), this protein is Protein esc1 (esc1).